Consider the following 164-residue polypeptide: Transcription factor E (164 aa).

The HTH TFE/IIEalpha-type domain occupies N5–E87.

This sequence belongs to the TFE family. In terms of assembly, monomer. Interaction with RNA polymerase subunits RpoF and RpoE is necessary for Tfe stimulatory transcription activity. Able to interact with Tbp and RNA polymerase in the absence of DNA promoter. Interacts both with the preinitiation and elongation complexes.

Transcription factor that plays a role in the activation of archaeal genes transcribed by RNA polymerase. Facilitates transcription initiation by enhancing TATA-box recognition by TATA-box-binding protein (Tbp), and transcription factor B (Tfb) and RNA polymerase recruitment. Not absolutely required for transcription in vitro, but particularly important in cases where Tbp or Tfb function is not optimal. It dynamically alters the nucleic acid-binding properties of RNA polymerases by stabilizing the initiation complex and destabilizing elongation complexes. Seems to translocate with the RNA polymerase following initiation and acts by binding to the non template strand of the transcription bubble in elongation complexes. The chain is Transcription factor E from Methanosarcina mazei (strain ATCC BAA-159 / DSM 3647 / Goe1 / Go1 / JCM 11833 / OCM 88) (Methanosarcina frisia).